We begin with the raw amino-acid sequence, 170 residues long: Plastocyanin, chloroplastic (170 aa).

The N-terminal 71 residues, 1–71 (MATVTSAAVA…SAMLASNAMA (71 aa)), are a transit peptide targeting the chloroplast. Residues 72 to 170 (LEVLLGGDDG…AGMVGKVTVN (99 aa)) enclose the Plastocyanin-like domain. Cu cation contacts are provided by His-108, Cys-155, His-158, and Met-163.

This sequence belongs to the plastocyanin family. The cofactor is Cu(2+).

It is found in the plastid. The protein resides in the chloroplast thylakoid membrane. Participates in electron transfer between P700 and the cytochrome b6-f complex in photosystem I. The protein is Plastocyanin, chloroplastic (PETE) of Solanum lycopersicum (Tomato).